The sequence spans 217 residues: Small ribosomal subunit protein uS3 (217 aa).

The KH type-2 domain occupies 38 to 106; that stretch reads VRKYIETALK…RVHINIIEIK (69 aa).

The protein belongs to the universal ribosomal protein uS3 family. Part of the 30S ribosomal subunit. Forms a tight complex with proteins S10 and S14.

Its function is as follows. Binds the lower part of the 30S subunit head. Binds mRNA in the 70S ribosome, positioning it for translation. This chain is Small ribosomal subunit protein uS3, found in Lysinibacillus sphaericus (strain C3-41).